The primary structure comprises 139 residues: Nucleoside diphosphate kinase (139 aa).

Residues Lys9, Phe57, Arg85, Thr91, Arg102, and Asn112 each coordinate ATP. His115 serves as the catalytic Pros-phosphohistidine intermediate.

It belongs to the NDK family. As to quaternary structure, homotetramer. Mg(2+) serves as cofactor.

Its subcellular location is the cytoplasm. The catalysed reaction is a 2'-deoxyribonucleoside 5'-diphosphate + ATP = a 2'-deoxyribonucleoside 5'-triphosphate + ADP. It carries out the reaction a ribonucleoside 5'-diphosphate + ATP = a ribonucleoside 5'-triphosphate + ADP. Major role in the synthesis of nucleoside triphosphates other than ATP. The ATP gamma phosphate is transferred to the NDP beta phosphate via a ping-pong mechanism, using a phosphorylated active-site intermediate. This is Nucleoside diphosphate kinase from Neorickettsia sennetsu (strain ATCC VR-367 / Miyayama) (Ehrlichia sennetsu).